The following is a 536-amino-acid chain: Global nitrogen regulator NrpR (536 aa).

A winged helix-turn-helix region spans residues 7 to 72 (VEILSILSEA…EITEKGIEEL (66 aa)). NRD stretches follow at residues 80 to 314 (RIGS…KGKF) and 315 to 536 (KVTP…YDDI).

It belongs to the NrpR family. Homotetramer. Binds to a single operator as a dimer and cooperatively to two operators as a dimer pair.

With respect to regulation, under nitrogen limitation, binding of the intracellular nitrogen metabolite 2-oxoglutarate to NrpR decreases the binding affinity of NrpR to DNA, leading to initiation of transcription. In terms of biological role, transcriptional repressor of nitrogen fixation and assimilation genes. Binds to two tandem operators in the glnA and nif promoters, thereby blocking transcription of the genes. This chain is Global nitrogen regulator NrpR, found in Methanococcus maripaludis (strain DSM 14266 / JCM 13030 / NBRC 101832 / S2 / LL).